A 142-amino-acid chain; its full sequence is Putative pre-16S rRNA nuclease (142 aa).

This sequence belongs to the YqgF nuclease family.

It is found in the cytoplasm. In terms of biological role, could be a nuclease involved in processing of the 5'-end of pre-16S rRNA. The protein is Putative pre-16S rRNA nuclease of Mesoplasma florum (strain ATCC 33453 / NBRC 100688 / NCTC 11704 / L1) (Acholeplasma florum).